Consider the following 95-residue polypeptide: Small ribosomal subunit protein uS14 (95 aa).

The protein belongs to the universal ribosomal protein uS14 family. In terms of assembly, part of the 30S ribosomal subunit. Contacts proteins S3 and S10.

Functionally, binds 16S rRNA, required for the assembly of 30S particles and may also be responsible for determining the conformation of the 16S rRNA at the A site. The chain is Small ribosomal subunit protein uS14 from Fusobacterium nucleatum subsp. nucleatum (strain ATCC 25586 / DSM 15643 / BCRC 10681 / CIP 101130 / JCM 8532 / KCTC 2640 / LMG 13131 / VPI 4355).